Here is a 553-residue protein sequence, read N- to C-terminus: Methionine--tRNA ligase (553 aa).

The 'HIGH' region signature appears at proline 12 to histidine 22. Zn(2+) is bound by residues cysteine 144, cysteine 147, cysteine 157, and cysteine 160. The 'KMSKS' region motif lies at lysine 332–serine 336. ATP is bound at residue lysine 335.

It belongs to the class-I aminoacyl-tRNA synthetase family. MetG type 1 subfamily. Monomer. The cofactor is Zn(2+).

It is found in the cytoplasm. The catalysed reaction is tRNA(Met) + L-methionine + ATP = L-methionyl-tRNA(Met) + AMP + diphosphate. Its function is as follows. Is required not only for elongation of protein synthesis but also for the initiation of all mRNA translation through initiator tRNA(fMet) aminoacylation. In Dehalococcoides mccartyi (strain ATCC BAA-2266 / KCTC 15142 / 195) (Dehalococcoides ethenogenes (strain 195)), this protein is Methionine--tRNA ligase.